Reading from the N-terminus, the 72-residue chain is LITAF domain-containing protein (72 aa).

An LITAF domain is found at 1-71; the sequence is MPVQAVCPYC…CQRELFYYHR (71 aa). The Zn(2+) site is built by cysteine 7 and cysteine 10. The tract at residues 22 to 45 is membrane-binding amphipathic helix; it reads PGALTWLLCTTLFLFGYVLGCCFL. Cysteine 59 and cysteine 62 together coordinate Zn(2+).

This sequence belongs to the CDIP1/LITAF family.

Its subcellular location is the membrane. The chain is LITAF domain-containing protein from Homo sapiens (Human).